The chain runs to 1480 residues: Nonribosomal peptide synthetase-like enzyme fsqF (1480 aa).

The interval 31–59 is disordered; sequence SPFADEPSIDVPSTHLPVVTPRSKTANDR. The segment at 132–527 is adenylation domain; sequence DSARATPHAP…VGRTDDQVKY (396 aa). Residues 662-741 enclose the Carrier domain; sequence STARTIAREY…SIASLIDANS (80 aa). At S700 the chain carries O-(pantetheine 4'-phosphoryl)serine. The segment covering 739–754 has biased composition (polar residues); it reads ANSSPGRGQPLNTQET. Residues 739-773 form a disordered region; that stretch reads ANSSPGRGQPLNTQETARLPLRSNGPAPSQQALER. The NAD-binding domain stretch occupies residues 780–1003; it reads LTGASGFLGI…ACVELGFYNG (224 aa). The tract at residues 1100–1465 is aminotransferase domain; it reads NAAGTVVHRE…YNTVAEVQEF (366 aa).

The protein belongs to the NRP synthetase family.

Its pathway is secondary metabolite biosynthesis. In terms of biological role, nonribosomal peptide synthetase-like enzyme; part of the gene cluster that mediates the biosynthesis of the isoquinoline alkaloids fumisoquin A, fumisoquin B and fumisoquin C; as well as small amounts of fumipyrrole as a shunt metabolite. The products of the cluster lead to a brown coloration and are important for growth and conidiation. The nonribosomal peptide synthetase-like protein fsqF, which lacks a canonical condensation domain, is required for addition of a serine-derived dehydroalanine moiety to activated tyrosine but is not essential for the subsequent steps leading to isoquinoline formation. A different enzyme, most likely the ATP-grasp enzyme fsqD, is responsible for activation of tyrosine. Three additional enzymes encoded by the fsq cluster, the N-methyltransferase fsqC, the phenol 2-monooxygenase fsqG and the FAD-dependent oxidase fsqB, catalyze the formation of the isoquinoline ring system in the fumisoquins. FsqB converts the fspF thiolation domain-bound (2S,4S,5S)-2-amino-6-(3,4-dihydroxyphenyl)-4-hydroxy-5-(methylamino)hexanoyl into isoquinoline. The cyclization most likely proceeds via a two-step mechanism, beginning with FAD-dependent oxidation of the methyl group to an iminium species followed by electrophilic attack on the deprotonated phenol. This chain is Nonribosomal peptide synthetase-like enzyme fsqF, found in Aspergillus fumigatus (strain ATCC MYA-4609 / CBS 101355 / FGSC A1100 / Af293) (Neosartorya fumigata).